A 135-amino-acid polypeptide reads, in one-letter code: Small ribosomal subunit protein uS11 (135 aa).

This sequence belongs to the universal ribosomal protein uS11 family. Part of the 30S ribosomal subunit. Interacts with proteins S7 and S18. Binds to IF-3.

Functionally, located on the platform of the 30S subunit, it bridges several disparate RNA helices of the 16S rRNA. Forms part of the Shine-Dalgarno cleft in the 70S ribosome. This Corynebacterium urealyticum (strain ATCC 43042 / DSM 7109) protein is Small ribosomal subunit protein uS11.